The primary structure comprises 256 residues: Triosephosphate isomerase (256 aa).

A substrate-binding site is contributed by 12 to 14 (NWK). His-99 functions as the Electrophile in the catalytic mechanism. Glu-171 functions as the Proton acceptor in the catalytic mechanism. Substrate is bound by residues Gly-177, Ser-217, and 238–239 (GG).

Belongs to the triosephosphate isomerase family. Homodimer.

It is found in the cytoplasm. The catalysed reaction is D-glyceraldehyde 3-phosphate = dihydroxyacetone phosphate. The protein operates within carbohydrate biosynthesis; gluconeogenesis. Its pathway is carbohydrate degradation; glycolysis; D-glyceraldehyde 3-phosphate from glycerone phosphate: step 1/1. Its function is as follows. Involved in the gluconeogenesis. Catalyzes stereospecifically the conversion of dihydroxyacetone phosphate (DHAP) to D-glyceraldehyde-3-phosphate (G3P). This is Triosephosphate isomerase from Rubrobacter xylanophilus (strain DSM 9941 / JCM 11954 / NBRC 16129 / PRD-1).